Consider the following 248-residue polypeptide: Probable transcriptional regulatory protein PSPPH_3775 (248 aa).

Belongs to the TACO1 family.

It is found in the cytoplasm. This is Probable transcriptional regulatory protein PSPPH_3775 from Pseudomonas savastanoi pv. phaseolicola (strain 1448A / Race 6) (Pseudomonas syringae pv. phaseolicola (strain 1448A / Race 6)).